Here is a 64-residue protein sequence, read N- to C-terminus: MPKQKTHSGAKKRFKVTGTGKIMKQQAGMRHNLEVKSSGRKARLNQDQPLAKADMKVAKKLLGR.

This sequence belongs to the bacterial ribosomal protein bL35 family.

This Clavibacter michiganensis subsp. michiganensis (strain NCPPB 382) protein is Large ribosomal subunit protein bL35.